The following is a 906-amino-acid chain: Kinesin-like protein KIN-7G (906 aa).

Positions 26–344 constitute a Kinesin motor domain; sequence SVAVAVRFRP…LKFAHRAKHI (319 aa). 105 to 112 provides a ligand contact to ATP; the sequence is GVTSSGKT. Coiled coils occupy residues 346–385, 733–814, and 839–875; these read IQATQNKIMDARSLIKKYQNEIRQLKEELEQLRRSIRTGT, SDEF…GRNQ, and GDMNALEAMLKEKDQRQAELHTKIEESKQKEAFLEKE. The disordered stretch occupies residues 803–840; sequence RLSSELASGRNQRRGSHGPRGARRESHTKRYEPARRGD. The segment covering 813-823 has biased composition (basic residues); that stretch reads NQRRGSHGPRG. A compositionally biased stretch (basic and acidic residues) spans 824-840; the sequence is ARRESHTKRYEPARRGD.

Belongs to the TRAFAC class myosin-kinesin ATPase superfamily. Kinesin family. KIN-7 subfamily.

In Oryza sativa subsp. japonica (Rice), this protein is Kinesin-like protein KIN-7G.